A 157-amino-acid polypeptide reads, in one-letter code: Ribosome-binding factor A (157 aa).

A disordered region spans residues 127-157 (QQQFGSEDASVEDEVLGDDVADDADETEGKD). Residues 135-157 (ASVEDEVLGDDVADDADETEGKD) show a composition bias toward acidic residues.

This sequence belongs to the RbfA family. As to quaternary structure, monomer. Binds 30S ribosomal subunits, but not 50S ribosomal subunits or 70S ribosomes.

Its subcellular location is the cytoplasm. One of several proteins that assist in the late maturation steps of the functional core of the 30S ribosomal subunit. Associates with free 30S ribosomal subunits (but not with 30S subunits that are part of 70S ribosomes or polysomes). Required for efficient processing of 16S rRNA. May interact with the 5'-terminal helix region of 16S rRNA. The polypeptide is Ribosome-binding factor A (Shewanella baltica (strain OS155 / ATCC BAA-1091)).